We begin with the raw amino-acid sequence, 214 residues long: Calcineurin B homologous protein 3 (214 aa).

Gly2 carries N-myristoyl glycine lipidation. In terms of domain architecture, EF-hand spans 110-145 (CRTDKLRFLFNMYDSDNDNKITLEEYRKVVEELLSG). Ca(2+) is bound by residues Asp123, Asp125, Asp127, Lys129, and Glu134.

Belongs to the calcineurin regulatory subunit family. CHP subfamily. In terms of assembly, monomer. Homodimer.

It is found in the nucleus. The protein resides in the cytoplasm. The protein localises to the membrane. It localises to the cell membrane. Its subcellular location is the cell projection. It is found in the lamellipodium. The protein resides in the ruffle membrane. In terms of biological role, functions as an integral cofactor in cell pH regulation by controlling plasma membrane-type Na(+)/H(+) exchange activity. Promotes the induction of hematopoietic stem cell differentiation toward megakaryocytic lineage. Essential for the coupling of ERK cascade activation with the expression of ETS family genes in megakaryocytic differentiation. Also involved in granulocytic differentiation in a ERK-dependent manner. Inhibits the phosphatase activity of calcineurin. In Xenopus laevis (African clawed frog), this protein is Calcineurin B homologous protein 3.